A 588-amino-acid chain; its full sequence is MDLARKEFLRGNGLAAGKMNISIDLDTNYAELVLNVGRVTLGENNRKKMKDCQLRKQQNENVSRAVCALLNSGGGVIKAEVENKGYSYKKDGIGLDLENSFSNMLPFVPNFLDFMQNGNYFHIFVKSWSLETSGPQIATLSSSLYKRDVTSAKVMNASAALEFLKDMEKTGGRAYLRPEFPAKRACVDVQEESNMEALAADFFNRTELGYKEKLTFTESTHVEIKNFSTEKLLQRITEILPQYVSAFANTDGGYLFVGLNEDKEVIGFKAEKSYLTKLEEVTKNSIGKLPVHHFCVEKGTINYLCKFLGVYDKGRLCGYVYALRVERFCCAVFAKKPDSWHVKDNRVKQLTEKEWIQFMVDSEPVCEELPSPASTSSPVSQSYPLREYINFKIQPLRYHLPGLSEKITCAPKTFCRNLFSQHEGLKQLICEEMGSVNKGSLIFSRSWSLDLGLQENHKVLCDALLISQDKPPVLYTFHMVQDEEFKDYSTQTAQTLKQKLAKIGGYTKKVCVMTKIFYLSPEGKTSCQYDLNSQVIYPESYYWTTAQTMKDLEKALSNILPKENQIFLFVCLFRFCLFVCWFVCFFLR.

A helical membrane pass occupies residues Ile566–Phe586.

The protein belongs to the Schlafen family.

Its subcellular location is the membrane. This is Schlafen family member 12-like (SLFN12L) from Homo sapiens (Human).